The primary structure comprises 307 residues: HPr kinase/phosphorylase (307 aa).

Residues H136 and K157 contribute to the active site. 151–158 lines the ATP pocket; sequence GESGIGKS. S158 lines the Mg(2+) pocket. Catalysis depends on D175, which acts as the Proton acceptor; for phosphorylation activity. Proton donor; for dephosphorylation activity. The tract at residues 198–207 is important for the catalytic mechanism of both phosphorylation and dephosphorylation; it reads LEVRGMGIID. E199 contributes to the Mg(2+) binding site. The active site involves R240. Residues 261 to 266 are important for the catalytic mechanism of dephosphorylation; that stretch reads PIRPGR.

This sequence belongs to the HPrK/P family. Homohexamer. It depends on Mg(2+) as a cofactor.

It carries out the reaction [HPr protein]-L-serine + ATP = [HPr protein]-O-phospho-L-serine + ADP + H(+). The catalysed reaction is [HPr protein]-O-phospho-L-serine + phosphate + H(+) = [HPr protein]-L-serine + diphosphate. Functionally, catalyzes the ATP- as well as the pyrophosphate-dependent phosphorylation of a specific serine residue in HPr, a phosphocarrier protein of the phosphoenolpyruvate-dependent sugar phosphotransferase system (PTS). HprK/P also catalyzes the pyrophosphate-producing, inorganic phosphate-dependent dephosphorylation (phosphorolysis) of seryl-phosphorylated HPr (P-Ser-HPr). The two antagonistic activities of HprK/P are regulated by several intracellular metabolites, which change their concentration in response to the absence or presence of rapidly metabolisable carbon sources (glucose, fructose, etc.) in the growth medium. Therefore, by controlling the phosphorylation state of HPr, HPrK/P is a sensor enzyme that plays a major role in the regulation of carbon metabolism and sugar transport: it mediates carbon catabolite repression (CCR), and regulates PTS-catalyzed carbohydrate uptake and inducer exclusion. This chain is HPr kinase/phosphorylase, found in Clostridium novyi (strain NT).